A 106-amino-acid chain; its full sequence is Large ribosomal subunit protein uL24 (106 aa).

This sequence belongs to the universal ribosomal protein uL24 family. In terms of assembly, part of the 50S ribosomal subunit.

Its function is as follows. One of two assembly initiator proteins, it binds directly to the 5'-end of the 23S rRNA, where it nucleates assembly of the 50S subunit. Functionally, one of the proteins that surrounds the polypeptide exit tunnel on the outside of the subunit. The chain is Large ribosomal subunit protein uL24 from Alkalilimnicola ehrlichii (strain ATCC BAA-1101 / DSM 17681 / MLHE-1).